The sequence spans 155 residues: Ribonuclease H (155 aa).

Positions glutamine 4–threonine 145 constitute an RNase H type-1 domain. 4 residues coordinate Mg(2+): aspartate 13, glutamate 51, aspartate 73, and aspartate 137.

It belongs to the RNase H family. In terms of assembly, monomer. The cofactor is Mg(2+).

Its subcellular location is the cytoplasm. It carries out the reaction Endonucleolytic cleavage to 5'-phosphomonoester.. Functionally, endonuclease that specifically degrades the RNA of RNA-DNA hybrids. This is Ribonuclease H from Bartonella quintana (strain Toulouse) (Rochalimaea quintana).